A 597-amino-acid polypeptide reads, in one-letter code: Vacuolar protein sorting-associated protein 33A (597 aa).

It belongs to the STXBP/unc-18/SEC1 family. In terms of assembly, core component of at least two putative endosomal tethering complexes, the homotypic fusion and vacuole protein sorting (HOPS) complex and the class C core vacuole/endosome tethering (CORVET) complex. Their common core is composed of the class C Vps proteins VPS11, VPS16, VPS18 and VPS33A, which in HOPS further associates with VPS39 and VPS41 and in CORVET with VPS8 and TGFBRAP1. Interacts with RAB5C, UVRAG, STX17, MON1A and MON1B. Associates with adaptor protein complex 3 (AP-3) and clathrin. Interacts with PLEKHM1. Ubiquitous.

The protein localises to the cytoplasmic vesicle. The protein resides in the late endosome membrane. It is found in the lysosome membrane. Its subcellular location is the early endosome. It localises to the autophagosome. The protein localises to the clathrin-coated vesicle. Plays a role in vesicle-mediated protein trafficking to lysosomal compartments including the endocytic membrane transport and autophagic pathways. Believed to act as a core component of the putative HOPS and CORVET endosomal tethering complexes which are proposed to be involved in the Rab5-to-Rab7 endosome conversion probably implicating MON1A/B, and via binding SNAREs and SNARE complexes to mediate tethering and docking events during SNARE-mediated membrane fusion. The HOPS complex is proposed to be recruited to Rab7 on the late endosomal membrane and to regulate late endocytic, phagocytic and autophagic traffic towards lysosomes. The CORVET complex is proposed to function as a Rab5 effector to mediate early endosome fusion probably in specific endosome subpopulations. Required for fusion of endosomes and autophagosomes with lysosomes; the function is dependent on its association with VPS16 but not VIPAS39. The function in autophagosome-lysosome fusion implicates STX17 but not UVRAG. The chain is Vacuolar protein sorting-associated protein 33A (Vps33a) from Rattus norvegicus (Rat).